The sequence spans 1704 residues: Phospholipid-transporting ATPase ABCA3 (1704 aa).

An N-linked (GlcNAc...) asparagine glycan is attached at Asn14. The chain crosses the membrane as a helical span at residues 22-42 (VLVTVLELFLPLLFSGILIWL). N-linked (GlcNAc...) asparagine glycosylation is found at Asn53, Asn124, and Asn140. Helical transmembrane passes span 261 to 283 (YQLP…RAVV), 307 to 327 (AWFL…TLLF), 344 to 364 (SLVL…SFMV), 373 to 393 (MAAA…FFVA), 405 to 425 (LCSC…IGKF), and 447 to 467 (FCFG…GLVT). The ABC transporter 1 domain maps to 530–763 (IKIKHLSKVF…YGAGYHMTLV (234 aa)). ATP is bound at residue 566 to 573 (GHNGAGKT). Asn620 and Asn783 each carry an N-linked (GlcNAc...) asparagine glycan. A run of 7 helical transmembrane segments spans residues 925-945 (MVAA…LAIN), 1100-1120 (IALN…ILAV), 1144-1164 (SALL…LVVF), 1183-1203 (LLLL…NFFF), 1213-1233 (LTIF…IMRI), 1245-1265 (LDHV…SSFY), and 1306-1326 (FVAS…LIET). Residues 1381-1614 (LIIKELSKVY…FGSGYSLRAK (234 aa)) enclose the ABC transporter 2 domain. 1416-1423 (GFNGAGKT) is an ATP binding site.

The protein belongs to the ABC transporter superfamily. ABCA family. In terms of assembly, homooligomer; disulfide-linked. Post-translationally, N-glycosylated. Localization at intracellular vesicles is accompanied by processing of oligosaccharide from high mannose type to complex type. N-linked glycosylation at Asn-124 and Asn-140 is required for stability and efficient anterograde trafficking and prevents from proteasomal degradation. Proteolytically cleaved by CTSL and to a lower extent by CTSB within multivesicular bodies (MVB) and lamellar bodies (LB) leading to a mature form of 150 kDa. As to expression, expressed in brain, pancreas, skeletal muscle and heart. Highly expressed in the lung in an AT2-cell-specific manner. Weakly expressed in placenta, kidney and liver. Also expressed in medullary thyroid carcinoma cells (MTC) and in C-cell carcinoma.

It localises to the endosome. Its subcellular location is the multivesicular body membrane. The protein resides in the cytoplasmic vesicle membrane. It is found in the late endosome membrane. The protein localises to the lysosome membrane. The enzyme catalyses ATP + H2O + xenobioticSide 1 = ADP + phosphate + xenobioticSide 2.. It catalyses the reaction a 1,2-diacyl-sn-glycero-3-phosphocholine(in) + ATP + H2O = a 1,2-diacyl-sn-glycero-3-phosphocholine(out) + ADP + phosphate + H(+). It carries out the reaction ATP + H2O + phospholipidSide 1 = ADP + phosphate + phospholipidSide 2.. The catalysed reaction is 1,2-dihexadecanoyl-sn-glycero-3-phosphocholine(in) + ATP + H2O = 1,2-dihexadecanoyl-sn-glycero-3-phosphocholine(out) + ADP + phosphate + H(+). The enzyme catalyses cholesterol(in) + ATP + H2O = cholesterol(out) + ADP + phosphate + H(+). It catalyses the reaction a 1,2-diacyl-sn-glycero-3-phospho-(1'-sn-glycerol)(in) + ATP + H2O = a 1,2-diacyl-sn-glycero-3-phospho-(1'-sn-glycerol)(out) + ADP + phosphate + H(+). Its activity is regulated as follows. The ATP-dependent phosphatidylcholine transport is competitively inhibited by miltefosine. In terms of biological role, catalyzes the ATP-dependent transport of phospholipids such as phosphatidylcholine and phosphoglycerol from the cytoplasm into the lumen side of lamellar bodies, in turn participates in the lamellar bodies biogenesis and homeostasis of pulmonary surfactant. Transports preferentially phosphatidylcholine containing short acyl chains. In addition plays a role as an efflux transporter of miltefosine across macrophage membranes and free cholesterol (FC) through intralumenal vesicles by removing FC from the cell as a component of surfactant and protects cells from free cholesterol toxicity. The sequence is that of Phospholipid-transporting ATPase ABCA3 from Homo sapiens (Human).